We begin with the raw amino-acid sequence, 408 residues long: Sporulation integral membrane protein YlbJ (408 aa).

Helical transmembrane passes span 6-26 (INTL…ISHP), 43-63 (VVFP…GFGI), 81-101 (VPGV…PAGA), 131-151 (LFIF…GILL), 214-234 (VTSS…FSVF), 294-314 (IIVS…VAGI), 324-344 (PFFI…MLLW), and 377-397 (LLVQ…IIIF).

The protein localises to the cell membrane. Its function is as follows. Required for spore cortex formation. The protein is Sporulation integral membrane protein YlbJ (ylbJ) of Bacillus subtilis (strain 168).